The primary structure comprises 55 residues: Large ribosomal subunit protein bL33 (55 aa).

This sequence belongs to the bacterial ribosomal protein bL33 family.

The polypeptide is Large ribosomal subunit protein bL33 (Renibacterium salmoninarum (strain ATCC 33209 / DSM 20767 / JCM 11484 / NBRC 15589 / NCIMB 2235)).